The sequence spans 323 residues: Aspartate carbamoyltransferase catalytic subunit (323 aa).

Carbamoyl phosphate-binding residues include Arg71 and Thr72. Lys99 lines the L-aspartate pocket. Positions 121, 151, and 154 each coordinate carbamoyl phosphate. L-aspartate contacts are provided by Arg184 and Arg239. Positions 280 and 281 each coordinate carbamoyl phosphate.

Belongs to the aspartate/ornithine carbamoyltransferase superfamily. ATCase family. Heterododecamer (2C3:3R2) of six catalytic PyrB chains organized as two trimers (C3), and six regulatory PyrI chains organized as three dimers (R2).

It carries out the reaction carbamoyl phosphate + L-aspartate = N-carbamoyl-L-aspartate + phosphate + H(+). It participates in pyrimidine metabolism; UMP biosynthesis via de novo pathway; (S)-dihydroorotate from bicarbonate: step 2/3. Catalyzes the condensation of carbamoyl phosphate and aspartate to form carbamoyl aspartate and inorganic phosphate, the committed step in the de novo pyrimidine nucleotide biosynthesis pathway. The sequence is that of Aspartate carbamoyltransferase catalytic subunit from Cupriavidus metallidurans (strain ATCC 43123 / DSM 2839 / NBRC 102507 / CH34) (Ralstonia metallidurans).